The primary structure comprises 87 residues: Glutaredoxin (87 aa).

The Glutaredoxin domain maps to 1–87 (MFVVIFGRPG…LMKEQFGIVA (87 aa)). Cysteines 11 and 14 form a disulfide.

The protein belongs to the glutaredoxin family. As to quaternary structure, monomer.

The protein resides in the cytoplasm. Its function is as follows. Has a glutathione-disulfide oxidoreductase activity in the presence of NADPH and glutathione reductase. Reduces low molecular weight disulfides and proteins. The polypeptide is Glutaredoxin (grxA) (Haemophilus influenzae (strain ATCC 51907 / DSM 11121 / KW20 / Rd)).